The sequence spans 925 residues: Ectonucleotide pyrophosphatase/phosphodiesterase family member 1 (925 aa).

Residues Met1–Gly17 are compositionally biased toward gly residues. Residues Met1 to Pro43 are disordered. Residues Met1–Lys76 lie on the Cytoplasmic side of the membrane. The Di-leucine motif motif lies at Ala45 to Pro52. A helical; Signal-anchor for type II membrane protein membrane pass occupies residues Val77 to Leu97. The Extracellular portion of the chain corresponds to Lys98–Asp925. SMB domains follow at residues Glu104 to Glu144 and His145 to Ser189. 10 disulfides stabilise this stretch: Cys108/Cys122, Cys112/Cys140, Cys120/Cys133, Cys126/Cys132, Cys149/Cys166, Cys154/Cys184, Cys164/Cys177, Cys170/Cys176, Cys195/Cys241, and Cys203/Cys415. N-linked (GlcNAc...) asparagine glycosylation is present at Asn179. Residues Val191–Leu591 form a phosphodiesterase region. AMP contacts are provided by Asp218, Thr256, and Asn277. Residues Asp218 and Thr256 each contribute to the Zn(2+) site. Residue Thr256 is the AMP-threonine intermediate of the active site. Residues Thr256 and Asn277 each coordinate CMP. The dTMP site is built by Thr256 and Asn277. GMP contacts are provided by Thr256 and Asn277. Thr256 carries the phosphothreonine modification. Asn285 carries N-linked (GlcNAc...) asparagine glycosylation. The GMP site is built by Leu290, Lys295, and Tyr340. Lys295 and Tyr340 together coordinate AMP. 2 residues coordinate CMP: Lys295 and Tyr340. Tyr340 lines the dTMP pocket. Asn341 is a glycosylation site (N-linked (GlcNAc...) asparagine). Asp376 lines the AMP pocket. The Zn(2+) site is built by Asp376, His380, Asp423, and His424. Asp376 contributes to the CMP binding site. DTMP is bound at residue Asp376. Asp376 is a GMP binding site. His380 is a 2',3'-cGAMP binding site. His424 is a binding site for AMP. Residue His424 participates in CMP binding. A dTMP-binding site is contributed by His424. Residue His424 participates in GMP binding. Disulfide bonds link Cys431-Cys530, Cys480-Cys868, Cys614-Cys672, Cys626-Cys726, Cys628-Cys711, and Cys838-Cys848. Asn477 carries N-linked (GlcNAc...) asparagine glycosylation. A 2',3'-cGAMP-binding site is contributed by Ser532. AMP is bound at residue His535. His535 provides a ligand contact to Zn(2+). Residue His535 participates in CMP binding. His535 is a dTMP binding site. A GMP-binding site is contributed by His535. Asn585, Asn643, Asn700, Asn731, and Asn748 each carry an N-linked (GlcNAc...) asparagine glycan. A linker region spans residues Asn597–Ala647. A nuclease-like domain region spans residues His654–Asp925. Ca(2+)-binding residues include Asp800, Asp802, Asp804, Arg806, and Asp808.

This sequence belongs to the nucleotide pyrophosphatase/phosphodiesterase family. In terms of assembly, homodimer. Interacts with INSR; leading to inhibit INSR autophosphorylation and subsequent activation of INSR kinase activity. Monomeric. Requires Zn(2+) as cofactor. Post-translationally, autophosphorylated as part of the catalytic cycle of phosphodiesterase/pyrophosphatase activity. In terms of processing, N-glycosylated. The secreted form is produced through cleavage at Lys-103 by intracellular processing. In terms of tissue distribution, expressed in plasma cells and also in a number of non-lymphoid tissues, including the distal convoluted tubule of the kidney, chondrocytes and epididymis. Expressed in melanocytes but not in keratinocytes.

The protein resides in the cell membrane. It localises to the basolateral cell membrane. It is found in the secreted. It carries out the reaction Hydrolytically removes 5'-nucleotides successively from the 3'-hydroxy termini of 3'-hydroxy-terminated oligonucleotides.. It catalyses the reaction a ribonucleoside 5'-triphosphate + H2O = a ribonucleoside 5'-phosphate + diphosphate + H(+). The catalysed reaction is ATP + H2O = AMP + diphosphate + H(+). The enzyme catalyses UTP + H2O = UMP + diphosphate + H(+). It carries out the reaction GTP + H2O = GMP + diphosphate + H(+). It catalyses the reaction CTP + H2O = CMP + diphosphate + H(+). The catalysed reaction is 2',3'-cGAMP + 2 H2O = GMP + AMP + 2 H(+). The enzyme catalyses P(1),P(4)-bis(5'-adenosyl) tetraphosphate + H2O = AMP + ATP + 2 H(+). It carries out the reaction 3',5'-cyclic AMP + H2O = AMP + H(+). At low concentrations of ATP, a phosphorylated intermediate is formed which inhibits further hydrolysis. Nucleotide pyrophosphatase that generates diphosphate (PPi) and functions in bone mineralization and soft tissue calcification by regulating pyrophosphate levels. PPi inhibits bone mineralization and soft tissue calcification by binding to nascent hydroxyapatite crystals, thereby preventing further growth of these crystals. Preferentially hydrolyzes ATP, but can also hydrolyze other nucleoside 5' triphosphates such as GTP, CTP and UTP to their corresponding monophosphates with release of pyrophosphate, as well as diadenosine polyphosphates, and also 3',5'-cAMP to AMP. May also be involved in the regulation of the availability of nucleotide sugars in the endoplasmic reticulum and Golgi, and the regulation of purinergic signaling. Inhibits ectopic joint calcification and maintains articular chondrocytes by repressing hedgehog signaling; it is however unclear whether hedgehog inhibition is direct or indirect. Appears to modulate insulin sensitivity and function. Also involved in melanogenesis. Also able to hydrolyze 2',3'-cGAMP (cyclic GMP-AMP), a second messenger that activates TMEM173/STING and triggers type-I interferon production. 2',3'-cGAMP degradation takes place in the lumen or extracellular space, and not in the cytosol where it is produced; the role of 2',3'-cGAMP hydrolysis is therefore unclear. Not able to hydrolyze the 2',3'-cGAMP linkage isomer 3'-3'-cGAMP. The chain is Ectonucleotide pyrophosphatase/phosphodiesterase family member 1 from Homo sapiens (Human).